Reading from the N-terminus, the 139-residue chain is Putative nickel-responsive regulator (139 aa).

Residues His-79, His-90, His-92, and Cys-98 each contribute to the Ni(2+) site.

It belongs to the transcriptional regulatory CopG/NikR family. It depends on Ni(2+) as a cofactor.

Transcriptional regulator. The polypeptide is Putative nickel-responsive regulator (Anaeromyxobacter dehalogenans (strain 2CP-1 / ATCC BAA-258)).